We begin with the raw amino-acid sequence, 219 residues long: Large ribosomal subunit protein bL25 (219 aa).

The interval 188–219 (TVAAPADTAVQPESSSTKGKKDEDGALAKDKK) is disordered. Residues 206 to 219 (GKKDEDGALAKDKK) show a composition bias toward basic and acidic residues.

Belongs to the bacterial ribosomal protein bL25 family. CTC subfamily. In terms of assembly, part of the 50S ribosomal subunit; part of the 5S rRNA/L5/L18/L25 subcomplex. Contacts the 5S rRNA. Binds to the 5S rRNA independently of L5 and L18.

Functionally, this is one of the proteins that binds to the 5S RNA in the ribosome where it forms part of the central protuberance. The sequence is that of Large ribosomal subunit protein bL25 from Elusimicrobium minutum (strain Pei191).